A 142-amino-acid polypeptide reads, in one-letter code: Universal stress protein G (142 aa).

This sequence belongs to the universal stress protein A family.

The chain is Universal stress protein G (uspG) from Escherichia coli O157:H7.